The sequence spans 278 residues: Protein D7 (278 aa).

2 CHHC U11-48K-type zinc fingers span residues 6-33 (LMQCPYDKNHMIRPSRFPYHLVKCRENN) and 40-67 (LATCPYNARHRVPKQELDLHMASCEYRV). Residues Cys-9, His-15, His-25, Cys-29, Cys-43, His-49, His-59, and Cys-63 each contribute to the Zn(2+) site. Over residues 149 to 164 (QVKQNQPEPEPFTSSE) the composition is skewed to polar residues. Disordered regions lie at residues 149–230 (QVKQ…PKAN) and 249–278 (PGGSSAASEPLGVDSFDEWPCLGRQPWVRK). Basic and acidic residues predominate over residues 165-175 (RNYDPRSKEPP). Polar residues predominate over residues 188-200 (ATTNTNPWCRQTG). Basic and acidic residues predominate over residues 214–225 (SSDEGPRNKEFP).

It belongs to the UPF0224 (FAM112) family.

It localises to the cytoplasm. Its function is as follows. Involved in oocyte maturation. It is possible that D7 is required at a certain point in the maturation process and that maturation cannot proceed beyond this point unless a threshold amount of D7 protein is provided. The sequence is that of Protein D7 (d7) from Xenopus laevis (African clawed frog).